Here is a 493-residue protein sequence, read N- to C-terminus: Tripartite motif-containing protein 5 (493 aa).

Residue A2 is modified to N-acetylalanine. The RING-type zinc-finger motif lies at 15–59 (CPICLELLTQPLSLDCGHSFCQACLTANHKKSMLDKGESSCPVCR). S86 carries the phosphoserine modification. The B box-type zinc-finger motif lies at 90 to 132 (QKVDHCARHGEKLLLFCQEDGKVICWLCERSQEHRGHHTFLTE). Zn(2+)-binding residues include C95, H98, C117, and H123. The stretch at 130–241 (LTEEVAREYQ…ISDLEHRLQG (112 aa)) forms a coiled coil. The tract at residues 185–198 (FEQLRDILDWEESN) is required for interaction with GABARAP and for autophagy. The B30.2/SPRY domain maps to 281 to 493 (LKGMLEVFRE…VPMTLCSPSS (213 aa)).

It belongs to the TRIM/RBCC family. As to quaternary structure, can form homodimers and homotrimers. In addition to lower-order dimerization, also exhibits a higher-order multimerization and both low- and high-order multimerizations are essential for its restriction activity. Isoform Delta interacts with BTBD1 and BTBD2. Interacts with PSMC4, PSMC5, PSMD7 and HSPA8/HSC70. Interacts (via B30.2/SPRY domain) with HSPA1A/B. Interacts with PSMC2, MAP3K7/TAK1, TAB2 and TAB3. Interacts with SQSTM1. Interacts with TRIM6 and TRIM34. Interacts with ULK1 (phosphorylated form), GABARAP, GABARAPL1, GABARAPL2, MAP1LC3A, MAP1LC3C and BECN1. Post-translationally, degraded in a proteasome-independent fashion in the absence of viral infection but in a proteasome-dependent fashion following exposure to restriction sensitive virus. Autoubiquitinated in a RING finger- and UBE2D2-dependent manner. Monoubiquitinated by TRIM21. Deubiquitinated by Yersinia YopJ. Ubiquitination may not lead to proteasomal degradation.

It is found in the cytoplasm. Its subcellular location is the nucleus. The enzyme catalyses S-ubiquitinyl-[E2 ubiquitin-conjugating enzyme]-L-cysteine + [acceptor protein]-L-lysine = [E2 ubiquitin-conjugating enzyme]-L-cysteine + N(6)-ubiquitinyl-[acceptor protein]-L-lysine.. It participates in protein modification; protein ubiquitination. Functionally, capsid-specific restriction factor that prevents infection from non-host-adapted retroviruses. Blocks viral replication early in the life cycle, after viral entry but before reverse transcription. In addition to acting as a capsid-specific restriction factor, also acts as a pattern recognition receptor that activates innate immune signaling in response to the retroviral capsid lattice. Binding to the viral capsid triggers its E3 ubiquitin ligase activity, and in concert with the heterodimeric ubiquitin conjugating enzyme complex UBE2V1-UBE2N (also known as UBC13-UEV1A complex) generates 'Lys-63'-linked polyubiquitin chains, which in turn are catalysts in the autophosphorylation of the MAP3K7/TAK1 complex (includes TAK1, TAB2, and TAB3). Activation of the MAP3K7/TAK1 complex by autophosphorylation results in the induction and expression of NF-kappa-B and MAPK-responsive inflammatory genes, thereby leading to an innate immune response in the infected cell. Restricts infection by N-tropic murine leukemia virus (N-MLV), equine infectious anemia virus (EIAV), simian immunodeficiency virus of macaques (SIVmac), feline immunodeficiency virus (FIV), and bovine immunodeficiency virus (BIV). Plays a role in regulating autophagy through activation of autophagy regulator BECN1 by causing its dissociation from its inhibitors BCL2 and TAB2. Also plays a role in autophagy by acting as a selective autophagy receptor which recognizes and targets HIV-1 capsid protein p24 for autophagic destruction. This Homo sapiens (Human) protein is Tripartite motif-containing protein 5 (TRIM5).